The chain runs to 501 residues: Phenylalanine--tRNA ligase alpha subunit (501 aa).

Positions 340 and 423 each coordinate L-phenylalanine. Glu-425 is a Mg(2+) binding site. Phe-448 is a binding site for L-phenylalanine.

This sequence belongs to the class-II aminoacyl-tRNA synthetase family. Phe-tRNA synthetase alpha subunit type 2 subfamily. As to quaternary structure, tetramer of two alpha and two beta subunits. It depends on Mg(2+) as a cofactor.

The protein resides in the cytoplasm. It catalyses the reaction tRNA(Phe) + L-phenylalanine + ATP = L-phenylalanyl-tRNA(Phe) + AMP + diphosphate + H(+). The chain is Phenylalanine--tRNA ligase alpha subunit from Methanococcus vannielii (strain ATCC 35089 / DSM 1224 / JCM 13029 / OCM 148 / SB).